A 385-amino-acid polypeptide reads, in one-letter code: 8-amino-7-oxononanoate synthase (385 aa).

Residue arginine 27 participates in substrate binding. 105–106 (GY) lines the pyridoxal 5'-phosphate pocket. Histidine 130 serves as a coordination point for substrate. Pyridoxal 5'-phosphate-binding positions include serine 176, 201-204 (DEAH), and 232-235 (TMSK). Lysine 235 carries the post-translational modification N6-(pyridoxal phosphate)lysine. Threonine 345 is a substrate binding site.

This sequence belongs to the class-II pyridoxal-phosphate-dependent aminotransferase family. BioF subfamily. In terms of assembly, homodimer. The cofactor is pyridoxal 5'-phosphate.

It carries out the reaction 6-carboxyhexanoyl-[ACP] + L-alanine + H(+) = (8S)-8-amino-7-oxononanoate + holo-[ACP] + CO2. It functions in the pathway cofactor biosynthesis; biotin biosynthesis. Catalyzes the decarboxylative condensation of pimeloyl-[acyl-carrier protein] and L-alanine to produce 8-amino-7-oxononanoate (AON), [acyl-carrier protein], and carbon dioxide. In Mycobacterium leprae (strain Br4923), this protein is 8-amino-7-oxononanoate synthase.